The primary structure comprises 509 residues: Histone deacetylase 2 (509 aa).

The interval 24 to 338 (RRVCYFYDPE…WCYETGVALG (315 aa)) is histone deacetylase. His158 acts as the Proton donor/acceptor in catalysis. Zn(2+)-binding residues include Asp193, His195, and Asp281. Residues 394–509 (PSVQFEERIP…NAKNEPGSSL (116 aa)) form a disordered region. 3 stretches are compositionally biased toward basic and acidic residues: residues 398-409 (FEERIPETKLPE), 418-434 (DERH…DHKP), and 448-472 (VKRE…HKVP). Polar residues predominate over residues 481-494 (SSKQVPTADANSMA).

The protein belongs to the histone deacetylase family. HD Type 1 subfamily. Zn(2+) is required as a cofactor. As to expression, expressed in roots.

The protein localises to the nucleus. It catalyses the reaction N(6)-acetyl-L-lysyl-[histone] + H2O = L-lysyl-[histone] + acetate. Responsible for the deacetylation of lysine residues on the N-terminal part of the core histones (H2A, H2B, H3 and H4). Histone deacetylation gives a tag for epigenetic repression and plays an important role in transcriptional regulation, cell cycle progression and developmental events. Histone deacetylases act via the formation of large multiprotein complexes. The polypeptide is Histone deacetylase 2 (Oryza sativa subsp. japonica (Rice)).